Reading from the N-terminus, the 292-residue chain is Insulin-like growth factor-binding protein 3 (292 aa).

A signal peptide spans 1-27 (MHPARPALWAAALTALTLLRGPPVARA). The IGFBP N-terminal domain maps to 36 to 119 (PVVRCEPCDA…LNGRGFCANA (84 aa)). 6 disulfides stabilise this stretch: Cys-40/Cys-69, Cys-43/Cys-71, Cys-51/Cys-72, Cys-60/Cys-75, Cys-83/Cys-96, and Cys-90/Cys-116. N-linked (GlcNAc...) asparagine glycosylation is found at Asn-118 and Asn-137. Disordered regions lie at residues 128-152 (YLPS…SVES) and 178-212 (KGHA…TEYG). Ser-149 carries the phosphoserine modification. The segment covering 178-191 (KGHARDSQRYKVDY) has biased composition (basic and acidic residues). The span at 192–203 (ESQSTDTQNFSS) shows a compositional bias: polar residues. A glycan (N-linked (GlcNAc...) asparagine) is linked at Asn-200. Phosphoserine is present on Ser-202. In terms of domain architecture, Thyroglobulin type-1 spans 211-286 (YGPCRREMED…DTKGKDDVHC (76 aa)). 3 disulfide bridges follow: Cys-214/Cys-241, Cys-252/Cys-263, and Cys-265/Cys-286.

Interacts with XLKD1. Binds IGF2 more than IGF1. Forms a ternary complex of about 140 to 150 kDa with IGF1 or IGF2 and a 85 kDa glycoprotein (ALS). Interacts with TMEM219. Phosphorylated by FAM20C in the extracellular medium.

The protein localises to the secreted. IGF-binding proteins prolong the half-life of the IGFs and have been shown to either inhibit or stimulate the growth promoting effects of the IGFs on cell culture. They alter the interaction of IGFs with their cell surface receptors. Also exhibits IGF-independent antiproliferative and apoptotic effects mediated by its receptor TMEM219/IGFBP-3R. Promotes testicular germ cell apoptosis. In Mus musculus (Mouse), this protein is Insulin-like growth factor-binding protein 3 (Igfbp3).